A 571-amino-acid chain; its full sequence is Double-stranded RNA-binding protein Staufen homolog 2 (571 aa).

Residues 8–75 (TPMCLVNELA…ANKALTESTL (68 aa)) form the DRBM 1 domain. Proline 9 and valine 13 each carry phosphoserine. A Phosphothreonine modification is found at arginine 18. The residue at position 21 (serine 21) is a Phosphoserine. Disordered stretches follow at residues 71 to 94 (TEST…PGSI) and 178 to 203 (ALQN…DDKD). A compositionally biased stretch (polar residues) spans 83-94 (PKSNVNNNPGSI). In terms of domain architecture, DRBM 2 spans 95–181 (TPTVELNGLA…AMKALQALQN (87 aa)). A Phosphoserine modification is found at serine 188. The segment covering 194-203 (SGKEMDDDKD) has biased composition (basic and acidic residues). 2 consecutive DRBM domains span residues 207–274 (SEIS…ELKK) and 307–375 (NPIS…QLGY). 2 short sequence motifs (nuclear localization signal) span residues 273–317 (KKLP…QIQQ) and 373–412 (LGYK…PKGI). Positions 381–571 (LQDQLDKTGE…QDCKKSKSVI (191 aa)) are required for dendritic transport. The disordered stretch occupies residues 382 to 413 (QDQLDKTGENKGWSGPKPGFPEPANNTPKGIL). 6 positions are modified to phosphoserine: serine 395, serine 416, serine 426, serine 440, serine 456, and serine 493. A disordered region spans residues 546-571 (LREKADNNQANPGSITQDCKKSKSVI). Residues 552–562 (NNQANPGSITQ) are compositionally biased toward polar residues.

As to quaternary structure, identified in a mRNP complex, at least composed of DHX9, DDX3X, ELAVL1, HNRNPU, IGF2BP1, ILF3, PABPC1, PCBP2, PTBP2, STAU1, STAU2, SYNCRIP and YBX1. Interacts with the exportin XPO5. This requires RNA and RAN bound to GTP. Interacts with microtubules. Isoform 2 and isoform 3 may also interact with ribosomes, and this association is independent of translation. Interacts with TRIM71 (via NHL repeats) in an RNA-dependent manner. As to expression, expressed in both somata and dendrites of hippocampal neurons.

It is found in the nucleus. The protein localises to the nucleolus. Its subcellular location is the cytoplasm. The protein resides in the endoplasmic reticulum. Its function is as follows. RNA-binding protein required for the microtubule-dependent transport of neuronal RNA from the cell body to the dendrite. As protein synthesis occurs within the dendrite, the localization of specific mRNAs to dendrites may be a prerequisite for neurite outgrowth and plasticity at sites distant from the cell body. This chain is Double-stranded RNA-binding protein Staufen homolog 2 (Stau2), found in Rattus norvegicus (Rat).